The chain runs to 856 residues: Probable alpha,alpha-trehalose-phosphate synthase [UDP-forming] 8 (856 aa).

Serine 5 carries the post-translational modification Phosphoserine. Threonine 32 bears the Phosphothreonine mark. The segment at glutamate 57–arginine 541 is glycosyltransferase.

The protein in the N-terminal section; belongs to the glycosyltransferase 20 family. It in the C-terminal section; belongs to the trehalose phosphatase family. As to expression, expressed in leaves, roots, stems and flowers.

It carries out the reaction D-glucose 6-phosphate + UDP-alpha-D-glucose = alpha,alpha-trehalose 6-phosphate + UDP + H(+). The polypeptide is Probable alpha,alpha-trehalose-phosphate synthase [UDP-forming] 8 (TPS8) (Arabidopsis thaliana (Mouse-ear cress)).